Here is a 338-residue protein sequence, read N- to C-terminus: MEMTHYEKTPLIRQVFNNGKTNSWFYVKHEILQPGGSFKSRGIGHLIRKSNEEALSEGSGKLAVFSSSGGNAGLAAATACRSMALNCSVVVPKTTKPRMVKKIQSAGAKVIIHGDHWGEADEYLRHKLMAQESQHGSKTLYVHPFDNETIWEGHSTIVDEIIEQLKENDISLPRVKALVCSVGGGGLFSGIIKGLDRNHLAEKIPVVAVETAGCDVLNKSLKNGSPVTLEKLTSVATSLASPYIASFAFESFNKYGCKSVVLSDQDVLATCLRYADDYNFIVEPACGASLHLCYHPEILEDILEQKIYEDDIVIIIACGGSCMTYEDLVKASSTLNVS.

At K39 the chain carries N6-(pyridoxal phosphate)lysine.

The protein belongs to the serine/threonine dehydratase family. Requires pyridoxal 5'-phosphate as cofactor.

The protein localises to the cytoplasm. The enzyme catalyses L-serine = pyruvate + NH4(+). It participates in carbohydrate biosynthesis; gluconeogenesis. The sequence is that of L-serine dehydratase (SDL1) from Saccharomyces cerevisiae (strain YJM789) (Baker's yeast).